Here is a 292-residue protein sequence, read N- to C-terminus: Homoserine kinase (292 aa).

Residue 81–91 (RPRSGLGSSGA) participates in ATP binding.

It belongs to the GHMP kinase family. Homoserine kinase subfamily.

The protein localises to the cytoplasm. The enzyme catalyses L-homoserine + ATP = O-phospho-L-homoserine + ADP + H(+). It participates in amino-acid biosynthesis; L-threonine biosynthesis; L-threonine from L-aspartate: step 4/5. Functionally, catalyzes the ATP-dependent phosphorylation of L-homoserine to L-homoserine phosphate. This chain is Homoserine kinase, found in Thermococcus kodakarensis (strain ATCC BAA-918 / JCM 12380 / KOD1) (Pyrococcus kodakaraensis (strain KOD1)).